The sequence spans 154 residues: MEYKQSPLPANKAIALVAHDNKKQDLLAWCRKHLDALRHHQLMATGTTGALIERETGLAIHKLISGPLGGDQQVGALITEGKVDMLVFFWDPFEPMPHDPDVKALLRIAAVWNIPVACNQVSADFMVASPCFSTPVERLIPDYAAYMARRAQGN.

Positions 6 to 154 (SPLPANKAIA…AYMARRAQGN (149 aa)) constitute an MGS-like domain. Substrate contacts are provided by residues His-19, Lys-23, 45–48 (TGTT), and 65–66 (SG). The active-site Proton donor/acceptor is Asp-71. His-98 lines the substrate pocket.

This sequence belongs to the methylglyoxal synthase family.

It catalyses the reaction dihydroxyacetone phosphate = methylglyoxal + phosphate. Its function is as follows. Catalyzes the formation of methylglyoxal from dihydroxyacetone phosphate. The polypeptide is Methylglyoxal synthase (Cellvibrio japonicus (strain Ueda107) (Pseudomonas fluorescens subsp. cellulosa)).